A 147-amino-acid polypeptide reads, in one-letter code: Allograft inflammatory factor 1 (147 aa).

Ser2 is modified (N-acetylserine). Position 11 is an N6-acetyllysine (Lys11). Position 39 is a phosphoserine (Ser39). EF-hand domains follow at residues 45-80 (SKLEGFKEKYMEFDLNGNGDIDIMSLKRMLEKLGVP) and 81-115 (KTHLELKKLIGEVSSGSGETFSYPDFLRMMLGKRS). Residues Asp58, Asn60, Asn62, Asp64, Thr100, and Asp105 each coordinate Ca(2+). The disordered stretch occupies residues 128–147 (AREKEKPTGPPAKKAISELP).

In terms of assembly, homodimer (Potential). Monomer. Interacts with LCP1. In terms of processing, phosphorylated on serine residues.

The protein localises to the cytoplasm. It is found in the cytoskeleton. It localises to the cell projection. The protein resides in the ruffle membrane. Its subcellular location is the phagocytic cup. Its function is as follows. Actin-binding protein that enhances membrane ruffling and RAC activation. Enhances the actin-bundling activity of LCP1. Binds calcium. Plays a role in RAC signaling and in phagocytosis. May play a role in macrophage activation and function. Promotes the proliferation of vascular smooth muscle cells and of T-lymphocytes. Enhances lymphocyte migration. Plays a role in vascular inflammation. In Macaca mulatta (Rhesus macaque), this protein is Allograft inflammatory factor 1 (AIF1).